The primary structure comprises 507 residues: Iroquois-class homeodomain protein IRX-3 (507 aa).

The interval 19–39 is disordered; that stretch reads RPGAAGGGGGGSSAGGRSGPG. Over residues 22–39 the composition is skewed to gly residues; it reads AAGGGGGGSSAGGRSGPG. Positions 130 to 192 form a DNA-binding region, homeobox; TALE-type; that stretch reads DPSRPKNATR…NARRRLKKEN (63 aa). Disordered regions lie at residues 193–398 and 416–468; these read KMTW…AAAA and RPFP…SGTD. Acidic residues-rich tracts occupy residues 213–223 and 230–261; these read REEEDEEEDEE and EMEE…DLEN. Composition is skewed to pro residues over residues 314–342 and 418–428; these read APPP…PAPA and FPGPPAGPRPH. A phosphoserine mark is found at Ser-326 and Ser-329. Over residues 436-460 the composition is skewed to low complexity; the sequence is APQHLLGLPGAAGHPAAAAAAYARP.

It belongs to the TALE/IRO homeobox family. As to expression, expressed by neural progenitor cells in discrete domains of the ventral neural tube. Also expressed in specific and overlapping patterns with Irx1 and Irx2 in the developing and adult metanephric kidney. In the adult metanephros, renal expression is confined to the S3 segment of the proximal tubule, in the loop of Henle.

It localises to the nucleus. In terms of biological role, transcription factor involved in SHH-dependent neural patterning. Together with NKX2-2 and NKX6-1 acts to restrict the generation of motor neurons to the appropriate region of the neural tube. Belongs to the class I proteins of neuronal progenitor factors, which are repressed by SHH signals. Involved in the transcriptional repression of MNX1 in non-motor neuron cells. Acts as a regulator of energy metabolism. This Mus musculus (Mouse) protein is Iroquois-class homeodomain protein IRX-3 (Irx3).